The primary structure comprises 309 residues: HPr kinase/phosphorylase (309 aa).

Residues His138 and Lys159 contribute to the active site. Gly153 to Ser160 serves as a coordination point for ATP. Ser160 provides a ligand contact to Mg(2+). The active-site Proton acceptor; for phosphorylation activity. Proton donor; for dephosphorylation activity is the Asp177. Residues Leu201–Asn210 are important for the catalytic mechanism of both phosphorylation and dephosphorylation. A Mg(2+)-binding site is contributed by Glu202. Residue Arg243 is part of the active site. Residues Pro264–Arg269 are important for the catalytic mechanism of dephosphorylation.

The protein belongs to the HPrK/P family. Homohexamer. Mg(2+) is required as a cofactor.

It catalyses the reaction [HPr protein]-L-serine + ATP = [HPr protein]-O-phospho-L-serine + ADP + H(+). The enzyme catalyses [HPr protein]-O-phospho-L-serine + phosphate + H(+) = [HPr protein]-L-serine + diphosphate. Catalyzes the ATP- as well as the pyrophosphate-dependent phosphorylation of a specific serine residue in HPr, a phosphocarrier protein of the phosphoenolpyruvate-dependent sugar phosphotransferase system (PTS). HprK/P also catalyzes the pyrophosphate-producing, inorganic phosphate-dependent dephosphorylation (phosphorolysis) of seryl-phosphorylated HPr (P-Ser-HPr). The two antagonistic activities of HprK/P are regulated by several intracellular metabolites, which change their concentration in response to the absence or presence of rapidly metabolisable carbon sources (glucose, fructose, etc.) in the growth medium. Also phosphorylates/dephosphorylates the HPr-like catabolite repression protein crh on a specific serine residue. Therefore, by controlling the phosphorylation state of HPr and crh, HPrK/P is a sensor enzyme that plays a major role in the regulation of carbon metabolism and sugar transport: it mediates carbon catabolite repression (CCR), and regulates PTS-catalyzed carbohydrate uptake and inducer exclusion. The chain is HPr kinase/phosphorylase from Bacillus mycoides (strain KBAB4) (Bacillus weihenstephanensis).